A 454-amino-acid chain; its full sequence is DNA-binding protein (454 aa).

The interval 1–41 is disordered; it reads MSHKKVVAISESSSDEEVPVAPPTAPPKKRQRKAVEEPRGH. Phosphotyrosine; by host is present on Tyr-129. 2 residues coordinate Zn(2+): Cys-213 and His-215. A flexible loop region spans residues 226–260; sequence VEMDVNSENAQRALKENPEKTKIVSNRWGRNVVQF. Positions 268, 284, 325, 327, 378, and 394 each coordinate Zn(2+). The tract at residues 440–454 is C-terminal arm, DBP binding; that stretch reads TILPQGQHDDDLVLF.

Belongs to the adenoviridae E2A DNA-binding protein family. As to quaternary structure, homomultimerizes on viral ssDNA bound to pTP. Forms a initiation complex with viral polymerase, pTP and hosts NFIA and POU2F1/OCT1. Interacts with host SRCAP.

Its subcellular location is the host nucleus. Plays a role in the elongation phase of viral strand displacement replication by unwinding the template in an ATP-independent fashion, employing its capacity to form multimers. Also enhances the rate of initiation. Released from template upon second strand synthesis. Assembles in complex with viral pTP, viral pol, host NFIA and host POU2F1/OCT1 on viral origin of replication. Covers the whole ssDNA genome during synthesis. The complementary strand synthesis induces its relese from DNA template. May inhibit cellular transcription mediated by the interaction between host SRCAP and CBP. The polypeptide is DNA-binding protein (Canine adenovirus serotype 1 (strain CLL) (CAdV-1)).